Reading from the N-terminus, the 230-residue chain is NAD(P)H-hydrate epimerase (230 aa).

Residues 11 to 218 (AIAVDQELFN…ALQRKYELNL (208 aa)) enclose the YjeF N-terminal domain. 61–65 (NNGGD) is a (6S)-NADPHX binding site. K(+) contacts are provided by asparagine 62 and aspartate 126. (6S)-NADPHX is bound by residues 130 to 136 (GFSFKPP) and aspartate 159. Serine 162 provides a ligand contact to K(+).

Belongs to the NnrE/AIBP family. The cofactor is K(+).

It catalyses the reaction (6R)-NADHX = (6S)-NADHX. The catalysed reaction is (6R)-NADPHX = (6S)-NADPHX. Functionally, catalyzes the epimerization of the S- and R-forms of NAD(P)HX, a damaged form of NAD(P)H that is a result of enzymatic or heat-dependent hydration. This is a prerequisite for the S-specific NAD(P)H-hydrate dehydratase to allow the repair of both epimers of NAD(P)HX. The chain is NAD(P)H-hydrate epimerase from Drosophila melanogaster (Fruit fly).